The following is a 207-amino-acid chain: Small ribosomal subunit protein uS4 (207 aa).

A disordered region spans residues 31–54; that stretch reads KCKLDSKPGQHGRTSGARTSDYGN. Residues 42–53 are compositionally biased toward polar residues; sequence GRTSGARTSDYG. The 64-residue stretch at 97–160 folds into the S4 RNA-binding domain; that stretch reads SRLDNVVYRM…KKQVRIAEAL (64 aa).

This sequence belongs to the universal ribosomal protein uS4 family. Part of the 30S ribosomal subunit. Contacts protein S5. The interaction surface between S4 and S5 is involved in control of translational fidelity.

In terms of biological role, one of the primary rRNA binding proteins, it binds directly to 16S rRNA where it nucleates assembly of the body of the 30S subunit. Functionally, with S5 and S12 plays an important role in translational accuracy. In Cupriavidus metallidurans (strain ATCC 43123 / DSM 2839 / NBRC 102507 / CH34) (Ralstonia metallidurans), this protein is Small ribosomal subunit protein uS4.